Consider the following 78-residue polypeptide: UPF0349 protein GK2958 (78 aa).

This sequence belongs to the UPF0349 family.

The polypeptide is UPF0349 protein GK2958 (Geobacillus kaustophilus (strain HTA426)).